A 273-amino-acid polypeptide reads, in one-letter code: Medium-wave-sensitive opsin 1 (273 aa).

Residues 1–5 lie on the Extracellular side of the membrane; it reads APRWV. The helical transmembrane segment at 6–30 threads the bilayer; it reads YHLTSAWMVFVVIASVFTNGLVLAA. The Cytoplasmic segment spans residues 31-42; sequence TMRFKKLRHPLN. Residues 43–68 form a helical membrane-spanning segment; that stretch reads WILVNLAIADLVETIIASTISVVNQM. Residues 69 to 82 are Extracellular-facing; the sequence is YGYFVLGHPLCVVE. A disulfide bridge links cysteine 79 with cysteine 156. Residues 83–102 traverse the membrane as a helical segment; the sequence is GYTASLCGITGLWSLAIISW. Residues 103-121 are Cytoplasmic-facing; the sequence is ERWMVVCRPFGNVRFDAKL. Residues 122-145 traverse the membrane as a helical segment; sequence AIAGIAFSWIWAAVWTAPPIFGWS. Residues 146–171 lie on the Extracellular side of the membrane; it reads RYWPHGLKTSCGPDVFSGSSYPGVQS. A helical transmembrane segment spans residues 172–199; it reads YMIVLMITCCFIPLSVIVLCYLQVWLAI. The Cytoplasmic segment spans residues 200-221; the sequence is RAVAKQQKESESTQKAEKEVTR. A helical transmembrane segment spans residues 222–245; sequence MVMVMIFAFCLCWGPYAFFACFAA. Residues 246–253 lie on the Extracellular side of the membrane; it reads AHPGYAFH. The helical transmembrane segment at 254–273 threads the bilayer; that stretch reads PLVAALPAYFAKSATIYNPI. Lysine 265 is subject to N6-(retinylidene)lysine.

The protein belongs to the G-protein coupled receptor 1 family. Opsin subfamily. Monomer. Homodimer. Homotetramer. Post-translationally, O-glycosylated. In terms of processing, phosphorylated on some or all of the serine and threonine residues present in the C-terminal region. In terms of tissue distribution, the three color pigments are found in the cone photoreceptor cells.

It is found in the membrane. Visual pigments are the light-absorbing molecules that mediate vision. They consist of an apoprotein, opsin, covalently linked to cis-retinal. This Odocoileus virginianus virginianus (Virginia white-tailed deer) protein is Medium-wave-sensitive opsin 1 (OPN1MW).